Reading from the N-terminus, the 539-residue chain is MADSPGCCSIWARCLHCLYSCHWRKYPKQKMQTSKCDCIWFGLLFLTFLLSLGWLYIGLILLNDLHNFNEFLFRHWGHWMDWSLIVLLVVSLLVTYASLLLLLGLLLQLCGQPLHLHSLHKVLLLLIVLLVAAGLVGLDIQWRQEWHSLRLSLQATAPFLHIGAVAGITLLAWPVADTFYRIHPRGPKVLLLLLFFGVTLVIYLMPLLFISSPCIMKLRDLPPKPGLVGHRGAPMLAPENTLMSLRKTAECGAAVFETDVMVSSDGVPFLMHDERLSRTTNVASVFPERISAHSSDFSWAELQRLNAGTWFLERQPFWGAKKLSGSDRKEAENQTIPALEELLKEAAALNLSIMFDLRRPPRNHTYYDTFVNQTLEAVLSANVSQAMVLWLPDEDRANVQQRAPRMRQIYGHQGGNWTERPQFLNLPYQDLPALDIKALHQDNISVNLFVVNKPWLFSLLWCAGVDSVTTNACQLLQQMQNPLWLLPPQKYLMIWVITDCASILLLLSIFLLRGGCAKRNRTGLETAVLLTKINNFASE.

At 1–40 the chain is on the cytoplasmic side; it reads MADSPGCCSIWARCLHCLYSCHWRKYPKQKMQTSKCDCIW. Residues 41 to 61 form a helical membrane-spanning segment; sequence FGLLFLTFLLSLGWLYIGLIL. Residues 62–83 lie on the Extracellular side of the membrane; the sequence is LNDLHNFNEFLFRHWGHWMDWS. A helical transmembrane segment spans residues 84–104; sequence LIVLLVVSLLVTYASLLLLLG. At 105–121 the chain is on the cytoplasmic side; it reads LLLQLCGQPLHLHSLHK. Residues 122–142 form a helical membrane-spanning segment; sequence VLLLLIVLLVAAGLVGLDIQW. The Extracellular portion of the chain corresponds to 143 to 154; that stretch reads RQEWHSLRLSLQ. The helical transmembrane segment at 155 to 175 threads the bilayer; that stretch reads ATAPFLHIGAVAGITLLAWPV. Over 176–189 the chain is Cytoplasmic; sequence ADTFYRIHPRGPKV. A helical membrane pass occupies residues 190–210; sequence LLLLLFFGVTLVIYLMPLLFI. The Extracellular segment spans residues 211 to 491; that stretch reads SSPCIMKLRD…PLWLLPPQKY (281 aa). The GP-PDE domain maps to 225–480; it reads PGLVGHRGAP…NACQLLQQMQ (256 aa). 3 residues coordinate a divalent metal cation: Glu257, Asp259, and His272. Asn333 carries N-linked (GlcNAc...) asparagine glycosylation. A helical membrane pass occupies residues 492-512; the sequence is LMIWVITDCASILLLLSIFLL. At 513–539 the chain is on the cytoplasmic side; the sequence is RGGCAKRNRTGLETAVLLTKINNFASE.

The protein belongs to the glycerophosphoryl diester phosphodiesterase family. The cofactor is Ca(2+). Detected in spleen, femur and calvaria.

Its subcellular location is the cell membrane. It localises to the cytoplasm. The protein localises to the cytoskeleton. The enzyme catalyses sn-glycero-3-phospho-1D-myo-inositol + H2O = 1D-myo-inositol 1-phosphate + glycerol + H(+). In terms of biological role, has glycerophosphoinositol inositolphosphodiesterase activity and specifically hydrolyzes glycerophosphoinositol, with no activity for other substrates such as glycerophosphoinositol 4-phosphate, glycerophosphocholine, glycerophosphoethanolamine, and glycerophosphoserine. Accelerates the program of osteoblast differentiation and growth. May play a role in remodeling of the actin cytoskeleton. The sequence is that of Glycerophosphoinositol inositolphosphodiesterase GDPD2 (Gdpd2) from Mus musculus (Mouse).